A 783-amino-acid polypeptide reads, in one-letter code: Putative ATP-dependent DNA helicase fml2 (783 aa).

Positions F118 to K286 constitute a Helicase ATP-binding domain. L131–T138 contacts ATP. A DEAH box motif is present at residues D234–H237. The 170-residue stretch at K450–V619 folds into the Helicase C-terminal domain.

This sequence belongs to the DEAD box helicase family. DEAH subfamily. FANCM sub-subfamily.

The protein resides in the nucleus. It localises to the nucleolus. The catalysed reaction is ATP + H2O = ADP + phosphate + H(+). In Schizosaccharomyces pombe (strain 972 / ATCC 24843) (Fission yeast), this protein is Putative ATP-dependent DNA helicase fml2.